A 905-amino-acid polypeptide reads, in one-letter code: Protein translocase subunit SecA (905 aa).

ATP contacts are provided by residues Gln-89, 107–111 (GEGKT), and Asp-502. Positions 889, 891, 900, and 901 each coordinate Zn(2+).

This sequence belongs to the SecA family. Monomer and homodimer. Part of the essential Sec protein translocation apparatus which comprises SecA, SecYEG and auxiliary proteins SecDF-YajC and YidC. Requires Zn(2+) as cofactor.

The protein resides in the cell inner membrane. It localises to the cytoplasm. The catalysed reaction is ATP + H2O + cellular proteinSide 1 = ADP + phosphate + cellular proteinSide 2.. Part of the Sec protein translocase complex. Interacts with the SecYEG preprotein conducting channel. Has a central role in coupling the hydrolysis of ATP to the transfer of proteins into and across the cell membrane, serving both as a receptor for the preprotein-SecB complex and as an ATP-driven molecular motor driving the stepwise translocation of polypeptide chains across the membrane. This chain is Protein translocase subunit SecA, found in Bartonella tribocorum (strain CIP 105476 / IBS 506).